The primary structure comprises 101 residues: uncharacterized protein (101 aa).

This is an uncharacterized protein from Escherichia coli O157:H7.